Reading from the N-terminus, the 484-residue chain is Glutamate mutase epsilon subunit (484 aa).

Arginine 66 lines the L-glutamate pocket. Glycine 68 is a binding site for adenosylcob(III)alamin. Residue arginine 100 coordinates L-glutamate. Asparagine 123 contributes to the adenosylcob(III)alamin binding site. L-glutamate-binding positions include 149–150, glutamate 171, and tyrosine 177; that span reads RH. An adenosylcob(III)alamin-binding site is contributed by proline 180. Residue tyrosine 181 participates in L-glutamate binding. Adenosylcob(III)alamin-binding residues include phenylalanine 297, lysine 326, glutamate 330, and isoleucine 334.

The protein belongs to the methylaspartate mutase GlmE subunit family. As to quaternary structure, heterotetramer composed of 2 epsilon subunits (GlmE) and 2 sigma subunits (GlmS). GlmE exists as a homodimer and GlmS as a monomer. It depends on adenosylcob(III)alamin as a cofactor.

The catalysed reaction is (2S,3S)-3-methyl-L-aspartate = L-glutamate. It functions in the pathway amino-acid degradation; L-glutamate degradation via mesaconate pathway; acetate and pyruvate from L-glutamate: step 1/4. Its function is as follows. Catalyzes the carbon skeleton rearrangement of L-glutamate to L-threo-3-methylaspartate ((2S,3S)-3-methylaspartate). The protein is Glutamate mutase epsilon subunit of Desulfitobacterium hafniense (strain Y51).